Here is a 377-residue protein sequence, read N- to C-terminus: Serine protease inhibitor (377 aa).

The signal sequence occupies residues Met-1–Lys-27. A glycan (N-linked (GlcNAc...) asparagine) is linked at Asn-301. An RCL region spans residues Gly-328–Arg-349. Asn-361 carries an N-linked (GlcNAc...) asparagine glycan.

The protein belongs to the serpin family.

Functionally, inhibitor of serine proteases. Inhibits chymotrypsin, cathepsin G and human neutrophil elastase. This chain is Serine protease inhibitor, found in Cyanea capillata (Lion's mane jellyfish).